Consider the following 531-residue polypeptide: UDP-glucuronosyltransferase 1A7 (531 aa).

The first 25 residues, 1-25 (MAPADFPASLPLCVCLLLASGLAQA), serve as a signal peptide directing secretion. Residues Asn-293 and Asn-431 are each glycosylated (N-linked (GlcNAc...) asparagine). A helical membrane pass occupies residues 489-509 (VIGFLLAIVLTVVFIVFKCCA).

Belongs to the UDP-glycosyltransferase family. Homodimer. Homooligomer. Interacts with UGT1A1, UGT1A3, UGT1A4, UGT1A6, UGT1A8, UGT1A9 and UGT1A10 to form heterodimers. In terms of tissue distribution, widely expressed with highest levels detected in colon and kidney.

The protein resides in the endoplasmic reticulum membrane. It carries out the reaction glucuronate acceptor + UDP-alpha-D-glucuronate = acceptor beta-D-glucuronoside + UDP + H(+). The enzyme catalyses 17alpha-estradiol + UDP-alpha-D-glucuronate = 17alpha-estradiol 3-O-(beta-D-glucuronate) + UDP + H(+). The catalysed reaction is prunetin + UDP-alpha-D-glucuronate = prunetin-5-O-beta-D-glucuronide + UDP. It catalyses the reaction 5-epi-5-F2t-IsoP + UDP-alpha-D-glucuronate = 5-epi-5-F2t-IsoP-glucuronide + UDP + H(+). It carries out the reaction (E)-ferulate + UDP-alpha-D-glucuronate = (E)-ferulic acid beta-D-glucuronate ester + UDP. The enzyme catalyses candesartan + UDP-alpha-D-glucuronate = candesartan O-beta-D-glucuronoside + UDP. The catalysed reaction is SN-38 + UDP-alpha-D-glucuronate = SN-38 O-beta-D-glucuronide + UDP + H(+). It catalyses the reaction mycophenolate + UDP-alpha-D-glucuronate = mycophenolate 7-O-beta-D-glucuronide + UDP + H(+). UDP-glucuronosyltransferase (UGT) that catalyzes phase II biotransformation reactions in which lipophilic substrates are conjugated with glucuronic acid to increase the metabolite's water solubility, thereby facilitating excretion into either the urine or bile. Essential for the elimination and detoxification of drugs, xenobiotics and endogenous compounds. Catalyzes the glucuronidation of endogenous estrogen hormone epiestradiol. Involved in the glucuronidation of F2-isoprostane (5-epi-5-F2t-IsoP). Involved in the glucuronidation of the phytochemical ferulic acid at the carboxylic acid group. Also catalyzes the glucuronidation of the isoflavones genistein, daidzein, glycitein, formononetin, biochanin A and prunetin, which are phytoestrogens with anticancer and cardiovascular properties. Involved in the glucuronidation of the AGTR1 angiotensin receptor antagonist caderastan, a drug which can inhibit the effect of angiotensin II. Involved in the biotransformation of 7-ethyl-10-hydroxycamptothecin (SN-38), the pharmacologically active metabolite of the anticancer drug irinotecan. Also metabolizes mycophenolate, an immunosuppressive agent. The protein is UDP-glucuronosyltransferase 1A7 of Mus musculus (Mouse).